We begin with the raw amino-acid sequence, 688 residues long: Potassium-transporting ATPase ATP-binding subunit (688 aa).

4 helical membrane passes run 34-54, 62-82, 219-239, and 260-280; these read PVMFVVYLGSGLTTLIWLAIL, ALFTGSVALWLWFTVLFANFA, VALTILLVALTIVFLLATATL, and VLVALLVCLIPTTIGGLLSAI. The active-site 4-aspartylphosphate intermediate is the Asp313. Residues Asp350, Glu354, 383 to 390, and Lys401 contribute to the ATP site; that span reads FSAQTRMS. Mg(2+) contacts are provided by Asp524 and Asp528. Helical transmembrane passes span 594–614, 622–642, and 667–687; these read FAIIPAAFAATYPQLNALNVM, AILSAVIFNALIIVFLIPLAL, and GLLVPFVGIKLIDLVLAALIM.

The protein belongs to the cation transport ATPase (P-type) (TC 3.A.3) family. Type IA subfamily. The system is composed of three essential subunits: KdpA, KdpB and KdpC.

It localises to the cell inner membrane. It catalyses the reaction K(+)(out) + ATP + H2O = K(+)(in) + ADP + phosphate + H(+). In terms of biological role, part of the high-affinity ATP-driven potassium transport (or Kdp) system, which catalyzes the hydrolysis of ATP coupled with the electrogenic transport of potassium into the cytoplasm. This subunit is responsible for energy coupling to the transport system and for the release of the potassium ions to the cytoplasm. In Yersinia enterocolitica serotype O:8 / biotype 1B (strain NCTC 13174 / 8081), this protein is Potassium-transporting ATPase ATP-binding subunit.